The chain runs to 541 residues: MVGKLNPTRFIFVTGGVVSSLGKGLAAASIGALLQARGFSVRLRKLDPYLNVDPGTMSPAQHGEVFVTSDGGETDLDLGHYERFTGVMKTRADNVTAGKIYHELIVKERRGDYLGQTVQVIPHVIDLIISCILHNDAGADFVICEIGGTVGDIESQPFLEAIRQVSYRLSKNLTIFVHLTLVPYIGAVGELKTKPTQHSVKELSSLGIQPDIVLYRSRAQLPQYQCAKIANFCNVAEDNIIAALDVSNIYMLPVMYHEHRLDTQILKHFDVDSPEPDLTQWENVLRMSETASDRIVIAIVGKYVTSLDAYTSLEEALRHAGLHSGIRVEIKWVDARLPASEIDLTDADAILIPGGFGDNGIGTKICAIEYARVNNIPMLGICLGMQLAVIEFALNVAGIEDANSTEFKSDCKNPVVCELPGLQVGDEYKMGGSMRLGSYTCNLAPGSRIMSIYDSSTVVERRRHRYGINPEYRDVLSKCGLAFTGAAEDRDLPEVLELPDHPWFIGVQFHPEFQSTPFKSHPLFLSFVTSTLQVKKASSRS.

Residues Met1–Val271 form an amidoligase domain region. Ser19 lines the CTP pocket. Ser19 lines the UTP pocket. Residues Ser20–Leu25 and Asp77 contribute to the ATP site. Residues Asp77 and Glu145 each contribute to the Mg(2+) site. CTP-binding positions include Asp152–Glu154, Lys192–Gln197, and Lys228. UTP contacts are provided by residues Lys192–Gln197 and Lys228. The region spanning Val296–Ala537 is the Glutamine amidotransferase type-1 domain. Gly355 is a binding site for L-glutamine. Cys382 serves as the catalytic Nucleophile; for glutamine hydrolysis. Residues Leu383–Gln386, Glu406, and Arg465 contribute to the L-glutamine site. Catalysis depends on residues His510 and Glu512.

It belongs to the CTP synthase family. As to quaternary structure, homotetramer.

It catalyses the reaction UTP + L-glutamine + ATP + H2O = CTP + L-glutamate + ADP + phosphate + 2 H(+). It carries out the reaction L-glutamine + H2O = L-glutamate + NH4(+). The catalysed reaction is UTP + NH4(+) + ATP = CTP + ADP + phosphate + 2 H(+). It participates in pyrimidine metabolism; CTP biosynthesis via de novo pathway; CTP from UDP: step 2/2. With respect to regulation, allosterically activated by GTP, when glutamine is the substrate; GTP has no effect on the reaction when ammonia is the substrate. The allosteric effector GTP functions by stabilizing the protein conformation that binds the tetrahedral intermediate(s) formed during glutamine hydrolysis. Inhibited by the product CTP, via allosteric rather than competitive inhibition. Functionally, catalyzes the ATP-dependent amination of UTP to CTP with either L-glutamine or ammonia as the source of nitrogen. Regulates intracellular CTP levels through interactions with the four ribonucleotide triphosphates. This Anaplasma phagocytophilum (strain HZ) protein is CTP synthase.